The chain runs to 353 residues: MAQKVRIALDAMGGDFGPSVVVPGAGISLTRHPDTEFILFGDSAAINRQLDKHPAMKAVSRVVHTDVAITMEEKPSQALRRGRKTSSMWLALDAVRKGEADVAVSAGNTGALMAMSRFNLRMLPGIDRPAIACVWPTIRSESVVLDVGASIGADARHLASLAIMGSAMARVLFDIERPTVGLLNIGVEEVKGVEEVKEAAELLRSMDLPELEFIGFVEGDGIGKGAADVIVTEGFSGNIALKTAEGTARQIAEYLRSAMSRTWRSKIGYLFAKSAFKALRDKMDPRKVNGGVFLGLNGVVIKSHGGTDAEGFASAVDVGYEMVRYDLLTKINQTFNRDGGSLTRMPTAQEAVS.

It belongs to the PlsX family. As to quaternary structure, homodimer. Probably interacts with PlsY.

The protein resides in the cytoplasm. The enzyme catalyses a fatty acyl-[ACP] + phosphate = an acyl phosphate + holo-[ACP]. It functions in the pathway lipid metabolism; phospholipid metabolism. Its function is as follows. Catalyzes the reversible formation of acyl-phosphate (acyl-PO(4)) from acyl-[acyl-carrier-protein] (acyl-ACP). This enzyme utilizes acyl-ACP as fatty acyl donor, but not acyl-CoA. The chain is Phosphate acyltransferase from Afipia carboxidovorans (strain ATCC 49405 / DSM 1227 / KCTC 32145 / OM5) (Oligotropha carboxidovorans).